The chain runs to 175 residues: Gamma-crystallin B (175 aa).

2 consecutive Beta/gamma crystallin 'Greek key' domains span residues 2 to 40 (GKIT…RVDS) and 41 to 83 (GCWM…RLIP). Positions 84-88 (QHSGT) are connecting peptide. Beta/gamma crystallin 'Greek key' domains lie at 89-129 (YRMR…NVME) and 130-172 (GCWV…RRVM).

Belongs to the beta/gamma-crystallin family.

Functionally, crystallins are the dominant structural components of the vertebrate eye lens. The chain is Gamma-crystallin B (Crygb) from Rattus norvegicus (Rat).